We begin with the raw amino-acid sequence, 264 residues long: Phosphonoacetaldehyde hydrolase (264 aa).

Asp9 (nucleophile) is an active-site residue. Mg(2+) is bound by residues Asp9 and Ala11. Catalysis depends on Lys50, which acts as the Schiff-base intermediate with substrate. Position 183 (Asp183) interacts with Mg(2+).

Belongs to the HAD-like hydrolase superfamily. PhnX family. Homodimer. Mg(2+) serves as cofactor.

It carries out the reaction phosphonoacetaldehyde + H2O = acetaldehyde + phosphate + H(+). Involved in phosphonate degradation. In Bacillus mycoides (strain KBAB4) (Bacillus weihenstephanensis), this protein is Phosphonoacetaldehyde hydrolase.